A 688-amino-acid polypeptide reads, in one-letter code: Protein adenylyltransferase SelO, mitochondrial (688 aa).

The transit peptide at 1–23 (MGEKRTIIKALKNSAASHFIKKL) directs the protein to the mitochondrion. ATP contacts are provided by Gly132, Gly134, Arg135, Lys156, Asp168, Gly169, Arg220, and Arg227. Asp338 (proton acceptor) is an active-site residue. The Mg(2+) site is built by Asn339 and Asp348. Asp348 lines the ATP pocket.

The protein belongs to the SELO family. The cofactor is Mg(2+). In terms of processing, forms probably one or more intrachain disulfide bridges.

It localises to the mitochondrion. The catalysed reaction is L-tyrosyl-[protein] + ATP = O-(5'-adenylyl)-L-tyrosyl-[protein] + diphosphate. Catalyzes the transfer of adenosine 5'-monophosphate (AMP) to Tyr residues of target mitochondrial proteins (AMPylation). Involved in redox homeostasis by regulating the cellular response to oxidative stress. Regulates protein S-glutathionylation levels possibly by AMPylation of deglutathionylation enzymes such as glutaredoxins. This is Protein adenylyltransferase SelO, mitochondrial from Saccharomyces cerevisiae (strain ATCC 204508 / S288c) (Baker's yeast).